Here is a 254-residue protein sequence, read N- to C-terminus: Large ribosomal subunit protein uL2 (254 aa).

The protein belongs to the universal ribosomal protein uL2 family. Component of the large ribosomal subunit. Mature ribosomes consist of a small (40S) and a large (60S) subunit. The 40S subunit contains about 32 different proteins and 1 molecule of RNA (18S). The 60S subunit contains 45 different proteins and 3 molecules of RNA (25S, 5.8S and 5S).

It localises to the cytoplasm. In terms of biological role, component of the ribosome, a large ribonucleoprotein complex responsible for the synthesis of proteins in the cell. The small ribosomal subunit (SSU) binds messenger RNAs (mRNAs) and translates the encoded message by selecting cognate aminoacyl-transfer RNA (tRNA) molecules. The large subunit (LSU) contains the ribosomal catalytic site termed the peptidyl transferase center (PTC), which catalyzes the formation of peptide bonds, thereby polymerizing the amino acids delivered by tRNAs into a polypeptide chain. The nascent polypeptides leave the ribosome through a tunnel in the LSU and interact with protein factors that function in enzymatic processing, targeting, and the membrane insertion of nascent chains at the exit of the ribosomal tunnel. This is Large ribosomal subunit protein uL2 from Candida albicans (strain SC5314 / ATCC MYA-2876) (Yeast).